Reading from the N-terminus, the 294-residue chain is Acetylglutamate kinase (294 aa).

Residues 63–64 (GG), Arg-85, and Asn-188 each bind substrate.

It belongs to the acetylglutamate kinase family. ArgB subfamily.

It localises to the cytoplasm. It carries out the reaction N-acetyl-L-glutamate + ATP = N-acetyl-L-glutamyl 5-phosphate + ADP. It functions in the pathway amino-acid biosynthesis; L-arginine biosynthesis; N(2)-acetyl-L-ornithine from L-glutamate: step 2/4. Catalyzes the ATP-dependent phosphorylation of N-acetyl-L-glutamate. This Methanococcus aeolicus (strain ATCC BAA-1280 / DSM 17508 / OCM 812 / Nankai-3) protein is Acetylglutamate kinase.